An 83-amino-acid polypeptide reads, in one-letter code: MLEGAKSIGAGAATIASAGAAIGIGNVLSSSIHSVARNPSLAKQSFGYAILGFALTEAIASFAPMMAFLISSVIPIKESKKEG.

A run of 2 helical transmembrane segments spans residues 8–28 (IGAG…GNVL) and 45–72 (SFGY…LISS).

The protein belongs to the ATPase C chain family. As to quaternary structure, F-type ATPases have 2 components, CF(1) - the catalytic core - and CF(0) - the membrane proton channel. CF(1) has five subunits: alpha(3), beta(3), gamma(1), delta(1), epsilon(1). CF(0) has three main subunits: a, b and c.

The protein resides in the mitochondrion membrane. Its function is as follows. This protein is one of the chains of the nonenzymatic membrane component (F0) of mitochondrial ATPase. The protein is ATP synthase subunit 9, mitochondrial (ATP9) of Helianthus annuus (Common sunflower).